The following is a 292-amino-acid chain: MEITASLVKELRERTGAGMMECKKALVENAGDIDAAAEWLRKSGLAKADKKADRVAAEGRIATAQAGGKAVLVEVNSETDFVAKDENFLAFTDVVANAALNSDAADADALKSVKLDSGETIEERRAAVIAKVGENLQVRRLVRIDSANNVAAYVHGGRIGVLVELKGGDAELARGIAMHIAAMNPPHVKASDVPAEFVAKEKEIELAKMSEKDKAKPAEILEKIISGKISKIVNEVTLYGQPYVLNTDQTVEQAVKAAGAEVIGFQRLAVGEGIEKVVEDYAAEVMKQAGLA.

An involved in Mg(2+) ion dislocation from EF-Tu region spans residues threonine 79–valine 82.

This sequence belongs to the EF-Ts family.

It localises to the cytoplasm. Associates with the EF-Tu.GDP complex and induces the exchange of GDP to GTP. It remains bound to the aminoacyl-tRNA.EF-Tu.GTP complex up to the GTP hydrolysis stage on the ribosome. The sequence is that of Elongation factor Ts from Xanthomonas campestris pv. campestris (strain B100).